The following is a 502-amino-acid chain: Type II methyltransferase M.HincII (502 aa).

This sequence belongs to the N(4)/N(6)-methyltransferase family.

The catalysed reaction is a 2'-deoxyadenosine in DNA + S-adenosyl-L-methionine = an N(6)-methyl-2'-deoxyadenosine in DNA + S-adenosyl-L-homocysteine + H(+). A gamma subtype methylase that recognizes the double-stranded sequence 5'-GTYRAC-3', methylates A-5 on both strands, and protects the DNA from cleavage by the HincII endonuclease. In Haemophilus influenzae, this protein is Type II methyltransferase M.HincII.